The sequence spans 315 residues: Protein sprouty homolog 2 (315 aa).

Over residues 1 to 15 the composition is skewed to polar residues; the sequence is MEARAQSGNGSQPLL. 2 disordered regions span residues 1–39 and 51–140; these read MEAR…QQVH and NTNE…GSSF. Basic and acidic residues predominate over residues 20–32; that stretch reads DGGRQRGEPDPRD. A compositionally biased stretch (low complexity) spans 108–140; it reads SRSISTVSSGSRSSTRTSTSSSSSEQRLLGSSF. The tract at residues 118 to 315 is required for interaction with CAV1; that stretch reads SRSSTRTSTS…VPPRNFEKPT (198 aa). The region spanning 177 to 291 is the SPR domain; that stretch reads RCEDCGKCKC…CYDRVNRPGC (115 aa). The tract at residues 178 to 315 is required for interaction with TESK1; that stretch reads CEDCGKCKCK…VPPRNFEKPT (138 aa).

The protein belongs to the sprouty family. As to quaternary structure, forms heterodimers with SPRY1. Forms a tripartite complex containing GAB1, METTL13 and SPRY2. Within the complex interacts with METTL13. Interacts with RAF1. Interacts (via C-terminus) with TESK1 (via C-terminus); the interaction disrupts SPRY2 interaction with GRB2, potentially via disruption of SPRY2 serine dephosphorylation. Interacts with PPP2R1A/PP2A-A and PPP2CA/PP2A-C; the interaction with PPP2CA/PP2A-C is inhibited by interaction with TESK1, possibly by vesicular sequestration of SPRY2. Inhibition of the interaction with the serine/threonine-protein phosphatase 2A (PP2A) holoenzyme results in loss of PP2A-mediated dephosphorylation, resulting in the loss of SPRY2 interaction with GRB2. Interacts with GRB2. Interacts with CBL/C-CBL; the interaction inhibits CBL-mediated ubiquitination of EGFR. Interacts (via C-terminus) with CAV1 (via C-terminus). Post-translationally, cleaved at Pro-144 by the prolyl endopeptidase FAP (seprase) activity (in vitro).

It localises to the cytoplasm. It is found in the cytoskeleton. Its subcellular location is the cell projection. The protein resides in the ruffle membrane. Its function is as follows. Antagonist of fibroblast growth factor (FGF) pathways via inhibition of FGF-mediated phosphorylation of ERK1/2. Thereby acts as an antagonist of FGF-induced retinal lens fiber differentiation, may inhibit limb bud outgrowth and may negatively modulate respiratory organogenesis. Inhibits TGFB-induced epithelial-to-mesenchymal transition in retinal lens epithelial cells. Inhibits CBL/C-CBL-mediated EGFR ubiquitination. In Macaca fascicularis (Crab-eating macaque), this protein is Protein sprouty homolog 2 (SPRY2).